The sequence spans 371 residues: MEGKLSMDSQILEEVIRSGNIPCHGRTGMLCAGGGLLPPALLDESRVPKFYLDALVASGGTSSTALPNTGLVYNLMGTSGLPKDVLSHIWSAVNRAKPGQLTRPEFFSLLALIALAQKGESLAALCAMDSLPIPYLNPVQAFPTASNPAPTTNTSSSFVPFGKIKPSAFIPTSLLPRRSMRKKKESDSKEVSAHNSPAKGAAHDLAGLDFGSDISSMKEEIKDINETPTQSCWRETVHAIYIVVEEANQLFKDSKKEVIQEISETEKGSAYFKSLSKAFDTLERVCKSAGVQLSVQSTKEAEYCRNLRRKWETFMDTTPEQNVEMTDDRKCAICCQPVQNPIDYGGQCFDVTCANLWVNGVSSTLPSLHLK.

An EH domain is found at 43–148 (DESRVPKFYL…VQAFPTASNP (106 aa)). A disordered region spans residues 179–205 (SMRKKKESDSKEVSAHNSPAKGAAHDL).

This is an uncharacterized protein from Caenorhabditis elegans.